A 216-amino-acid chain; its full sequence is Small ribosomal subunit protein uS3c (216 aa).

One can recognise a KH type-2 domain in the interval 43–118 (INNYVKKNMR…KLNITITRIE (76 aa)).

The protein belongs to the universal ribosomal protein uS3 family. In terms of assembly, part of the 30S ribosomal subunit.

It is found in the plastid. In Cuscuta reflexa (Southern Asian dodder), this protein is Small ribosomal subunit protein uS3c (rps3).